Here is a 451-residue protein sequence, read N- to C-terminus: Gamma-aminobutyric acid receptor subunit alpha-2 (451 aa).

Residues Met-1 to Ala-28 form the signal peptide. The Extracellular portion of the chain corresponds to Asn-29–Lys-249. Asn-38 carries an N-linked (GlcNAc...) asparagine glycan. Arg-94 contributes to the 4-aminobutanoate binding site. N-linked (GlcNAc...) asparagine glycosylation is found at Asn-114 and Asn-138. Thr-157 is a 4-aminobutanoate binding site. Cys-166 and Cys-180 are joined by a disulfide. 3 helical membrane-spanning segments follow: residues Ile-250 to Val-270, Ala-281 to Ala-300, and Ala-312 to Ala-332. At Thr-333–Met-420 the chain is on the cytoplasmic side. The disordered stretch occupies residues Lys-389–Lys-408. Residues Pro-396 to Lys-408 are compositionally biased toward basic and acidic residues. The helical transmembrane segment at Ser-421–Leu-441 threads the bilayer. Topologically, residues Asn-442–Pro-451 are extracellular.

It belongs to the ligand-gated ion channel (TC 1.A.9) family. Gamma-aminobutyric acid receptor (TC 1.A.9.5) subfamily. GABRA2 sub-subfamily. As to quaternary structure, heteropentamer, formed by a combination of alpha (GABRA1-6), beta (GABRB1-3), gamma (GABRG1-3), delta (GABRD), epsilon (GABRE), rho (GABRR1-3), pi (GABRP) and theta (GABRQ) subunits, each subunit exhibiting distinct physiological and pharmacological properties. Binds UBQLN1. Interacts with KIF21B. Interacts with LHFPL4. Interacts with SHISA7; interaction leads to the regulation of GABA(A) receptor trafficking, channel deactivation kinetics and pharmacology. Glycosylated. As to expression, expressed in brain (at protein level).

It localises to the postsynaptic cell membrane. It is found in the cell membrane. Its subcellular location is the cytoplasmic vesicle membrane. The protein localises to the cell projection. The protein resides in the dendrite. The catalysed reaction is chloride(in) = chloride(out). Activated by pentobarbital. Inhibited by the antagonist bicuculline. Its function is as follows. Alpha subunit of the heteropentameric ligand-gated chloride channel gated by gamma-aminobutyric acid (GABA), a major inhibitory neurotransmitter in the brain. GABA-gated chloride channels, also named GABA(A) receptors (GABAAR), consist of five subunits arranged around a central pore and contain GABA active binding site(s) located at the alpha and beta subunit interface(s). When activated by GABA, GABAARs selectively allow the flow of chloride anions across the cell membrane down their electrochemical gradient. Chloride influx into the postsynaptic neuron following GABAAR opening decreases the neuron ability to generate a new action potential, thereby reducing nerve transmission. The alpha-2 subunit exhibits synaptogenic activity together with beta-2 and very little to no activity together with beta-3, the gamma-2 subunit being necessary but not sufficient to induce rapid synaptic contacts formation. This Rattus norvegicus (Rat) protein is Gamma-aminobutyric acid receptor subunit alpha-2.